We begin with the raw amino-acid sequence, 444 residues long: Probable D-serine dehydratase (444 aa).

K118 carries the post-translational modification N6-(pyridoxal phosphate)lysine.

This sequence belongs to the serine/threonine dehydratase family. DsdA subfamily. Requires pyridoxal 5'-phosphate as cofactor.

The enzyme catalyses D-serine = pyruvate + NH4(+). The sequence is that of Probable D-serine dehydratase from Acinetobacter baumannii (strain ATCC 17978 / DSM 105126 / CIP 53.77 / LMG 1025 / NCDC KC755 / 5377).